A 282-amino-acid polypeptide reads, in one-letter code: Pantothenate synthetase (282 aa).

Position 30–37 (30–37 (MGALHAGH)) interacts with ATP. His37 (proton donor) is an active-site residue. Gln61 is a binding site for (R)-pantoate. Gln61 contacts beta-alanine. 147–150 (GEKD) is an ATP binding site. A (R)-pantoate-binding site is contributed by Gln153. Residues Val176 and 184–187 (LSSR) each bind ATP.

This sequence belongs to the pantothenate synthetase family. Homodimer.

Its subcellular location is the cytoplasm. The catalysed reaction is (R)-pantoate + beta-alanine + ATP = (R)-pantothenate + AMP + diphosphate + H(+). Its pathway is cofactor biosynthesis; (R)-pantothenate biosynthesis; (R)-pantothenate from (R)-pantoate and beta-alanine: step 1/1. Functionally, catalyzes the condensation of pantoate with beta-alanine in an ATP-dependent reaction via a pantoyl-adenylate intermediate. This is Pantothenate synthetase from Bacteroides fragilis (strain YCH46).